The following is a 294-amino-acid chain: 4-hydroxy-tetrahydrodipicolinate synthase (294 aa).

Thr44 contributes to the pyruvate binding site. Tyr132 (proton donor/acceptor) is an active-site residue. The active-site Schiff-base intermediate with substrate is Lys161. Ile206 serves as a coordination point for pyruvate.

This sequence belongs to the DapA family. As to quaternary structure, homotetramer; dimer of dimers.

Its subcellular location is the cytoplasm. It catalyses the reaction L-aspartate 4-semialdehyde + pyruvate = (2S,4S)-4-hydroxy-2,3,4,5-tetrahydrodipicolinate + H2O + H(+). It participates in amino-acid biosynthesis; L-lysine biosynthesis via DAP pathway; (S)-tetrahydrodipicolinate from L-aspartate: step 3/4. Functionally, catalyzes the condensation of (S)-aspartate-beta-semialdehyde [(S)-ASA] and pyruvate to 4-hydroxy-tetrahydrodipicolinate (HTPA). The protein is 4-hydroxy-tetrahydrodipicolinate synthase of Thermotoga neapolitana (strain ATCC 49049 / DSM 4359 / NBRC 107923 / NS-E).